A 123-amino-acid chain; its full sequence is Ribonuclease P protein component 1 (123 aa).

A disordered region spans residues Pro-73–Gly-93.

Belongs to the eukaryotic/archaeal RNase P protein component 1 family. Consists of a catalytic RNA component and at least 4-5 protein subunits.

Its subcellular location is the cytoplasm. It catalyses the reaction Endonucleolytic cleavage of RNA, removing 5'-extranucleotides from tRNA precursor.. Its function is as follows. Part of ribonuclease P, a protein complex that generates mature tRNA molecules by cleaving their 5'-ends. This Halobacterium salinarum (strain ATCC 29341 / DSM 671 / R1) protein is Ribonuclease P protein component 1.